A 179-amino-acid chain; its full sequence is Protein GrpE (179 aa).

Residues 1-20 form a disordered region; that stretch reads MSEETKEEIKNEKVDEEVTE.

It belongs to the GrpE family. In terms of assembly, homodimer.

It is found in the cytoplasm. Functionally, participates actively in the response to hyperosmotic and heat shock by preventing the aggregation of stress-denatured proteins, in association with DnaK and GrpE. It is the nucleotide exchange factor for DnaK and may function as a thermosensor. Unfolded proteins bind initially to DnaJ; upon interaction with the DnaJ-bound protein, DnaK hydrolyzes its bound ATP, resulting in the formation of a stable complex. GrpE releases ADP from DnaK; ATP binding to DnaK triggers the release of the substrate protein, thus completing the reaction cycle. Several rounds of ATP-dependent interactions between DnaJ, DnaK and GrpE are required for fully efficient folding. The polypeptide is Protein GrpE (Lactococcus lactis subsp. cremoris (strain MG1363)).